The primary structure comprises 71 residues: Frenatin 2.3S (71 aa).

A signal peptide spans 1–22 (MAFLKKSLFLVLFLGLVSLSMG). The segment at 21–56 (MGEREKREEEEEEEEENKEEEANEEGKGESEEKRGL) is disordered. Residues 23-54 (EREKREEEEEEEEENKEEEANEEGKGESEEKR) constitute a propeptide that is removed on maturation. A compositionally biased stretch (acidic residues) spans 28–43 (EEEEEEEEENKEEEAN). The span at 44 to 55 (EEGKGESEEKRG) shows a compositional bias: basic and acidic residues. Glycine 70 is subject to Glycine amide; in Frenatin 2.1S.

It belongs to the frog skin active peptide (FSAP) family. Frenatin subfamily. In terms of processing, frenatin 2.3S is not amidated. Expressed by the skin glands.

The protein localises to the secreted. Antimicrobial peptide with potent activity against Gram-negative bacteria. Shows immunostimulatory actions both in vitro and in vivo. In vitro, is cytotoxic to non-small cell lung adenocarcinoma A549 cells. Also, stimulates production of pro-inflammatory cytokines by mouse peritoneal macrophages and down-regulates production of the anti-inflammatory cytokine IL-10 by lipopolysaccharide (LPS)-stimulated cells. In vivo, intraperitoneal injection in mice enhances the activation state and homing capacity of Th1 type lymphocytes and promotes the recruitment, activation and tumoricidal capacities of peritoneal NK cells. Has a very weak activity in stimulation of insulin release and a weak hemolytic activity. In terms of biological role, antimicrobial peptide with potent activity against some Gram-positive and Gram-negative bacteria. Has a multifunctional mode of action. It displays depolarization and bacterial cell leakage, and can also internalize into bacterial cells and alter specific gene expression involved in bacterial resistance mechanisms. Does not agglutinate bacteria and lipid vesicles, even a high concentrations. Also displays moderate cellular protection against yellow fever virus (YFV)-infected Vero cells without causing significant cytotoxicity. Shows a weak hemolytic activity, and is not cytotoxic to monocytes. Frenatin 2.3S (version without Gly-71) shows no or very weak antibacterial activity, shows no or very weak cytotoxicity to lung adenocarcinoma A549 cells and shows very weak hemolysis. It only stimulates production of pro-inflammatory cytokines IL-23 (but not IL-1beta and TNF-alpha) by mouse peritoneal macrophages and has no effect on the production of the anti-inflammatory cytokine IL-10. Frenatin 2.3S (version without Gly-71) very weakly stimulates insulin release. The protein is Frenatin 2.3S of Sphaenorhynchus lacteus (Orinoco lime treefrog).